The primary structure comprises 771 residues: Heat shock transcription factor (771 aa).

The segment at 1 to 70 (MTTNLYAIAG…GIGISKPGLS (70 aa)) is disordered. 2 stretches are compositionally biased toward low complexity: residues 11-23 (PSKP…TPSP) and 31-42 (LKSLTSLPTNPL). Polar residues predominate over residues 43–62 (NPQGTSTSNALTNQSSSTGI). The DNA-binding element occupies 78–168 (MKVPAFLNKL…PIELWEFANP (91 aa)). The disordered stretch occupies residues 183–266 (RKNNRLSNSG…PPSHTSAGPL (84 aa)). Low complexity-rich tracts occupy residues 189 to 199 (SNSGVGSSSSL) and 212 to 233 (SASA…ISQG). The span at 238 to 262 (NHSTSGKYLITDGTTPGSAPPSHTS) shows a compositional bias: polar residues. Residues 280–333 (GIAAIRQTQASIATDLRKLQASNEALWRQAYETQEKQRKHEETIDLIVSFLERL) are involved in trimerization. Basic and acidic residues-rich tracts occupy residues 350–372 (RGVG…ARFA) and 399–415 (TGEH…DRLV). Disordered stretches follow at residues 350 to 513 (RGVG…SSNA), 590 to 634 (QALT…GSGT), and 708 to 771 (SGVG…SGLK). A compositionally biased stretch (polar residues) spans 418 to 448 (GSNSEYSIPSVKRTSSSSHPLSLGQLGSSRF). Composition is skewed to low complexity over residues 497-511 (LSPL…PSSS) and 599-620 (HNPS…SASA).

Belongs to the HSF family. Homotrimer. Homotrimerization increases the affinity of HSF1 to DNA. Interacts with transcriptional coregulator SSA1 on chromatin. Post-translationally, phosphorylated at high temperature.

The protein localises to the nucleus. Its function is as follows. DNA-binding transcription factor that specifically binds heat shock promoter elements (HSE) and activates transcription. Promotes thermotolerance by transiently regulating a subset of genes. Induces expression of STI, SSA1, SSA2, HSP78 and KAR2 during the heat response. In Cryptococcus neoformans var. grubii serotype A (strain H99 / ATCC 208821 / CBS 10515 / FGSC 9487) (Filobasidiella neoformans var. grubii), this protein is Heat shock transcription factor.